A 690-amino-acid polypeptide reads, in one-letter code: Elongation factor G (690 aa).

Residues 8-283 (EDYRNFGIMA…AVVAYLPSPL (276 aa)) enclose the tr-type G domain. GTP contacts are provided by residues 17–24 (AHIDAGKT), 81–85 (DTPGH), and 135–138 (NKMD).

This sequence belongs to the TRAFAC class translation factor GTPase superfamily. Classic translation factor GTPase family. EF-G/EF-2 subfamily.

The protein localises to the cytoplasm. In terms of biological role, catalyzes the GTP-dependent ribosomal translocation step during translation elongation. During this step, the ribosome changes from the pre-translocational (PRE) to the post-translocational (POST) state as the newly formed A-site-bound peptidyl-tRNA and P-site-bound deacylated tRNA move to the P and E sites, respectively. Catalyzes the coordinated movement of the two tRNA molecules, the mRNA and conformational changes in the ribosome. The sequence is that of Elongation factor G from Nitrobacter winogradskyi (strain ATCC 25391 / DSM 10237 / CIP 104748 / NCIMB 11846 / Nb-255).